A 394-amino-acid polypeptide reads, in one-letter code: Phosphopentomutase (394 aa).

Mn(2+) contacts are provided by Asp-13, Asp-286, His-291, Asp-327, His-328, and His-339.

Belongs to the phosphopentomutase family. The cofactor is Mn(2+).

It localises to the cytoplasm. The catalysed reaction is 2-deoxy-alpha-D-ribose 1-phosphate = 2-deoxy-D-ribose 5-phosphate. The enzyme catalyses alpha-D-ribose 1-phosphate = D-ribose 5-phosphate. Its pathway is carbohydrate degradation; 2-deoxy-D-ribose 1-phosphate degradation; D-glyceraldehyde 3-phosphate and acetaldehyde from 2-deoxy-alpha-D-ribose 1-phosphate: step 1/2. Its function is as follows. Isomerase that catalyzes the conversion of deoxy-ribose 1-phosphate (dRib-1-P) and ribose 1-phosphate (Rib-1-P) to deoxy-ribose 5-phosphate (dRib-5-P) and ribose 5-phosphate (Rib-5-P), respectively. This is Phosphopentomutase from Bacillus mycoides (strain KBAB4) (Bacillus weihenstephanensis).